Here is a 431-residue protein sequence, read N- to C-terminus: Glutamate--tRNA ligase 2 (431 aa).

A 'HIGH' region motif is present at residues 6-16; sequence PSPTGDMHIGN. A 'KMSKS' region motif is present at residues 235-239; it reads KMSKR. Lys-238 contacts ATP.

The protein belongs to the class-I aminoacyl-tRNA synthetase family. Glutamate--tRNA ligase type 1 subfamily. Monomer.

Its subcellular location is the cytoplasm. It carries out the reaction tRNA(Glu) + L-glutamate + ATP = L-glutamyl-tRNA(Glu) + AMP + diphosphate. Catalyzes the attachment of glutamate to tRNA(Glu) in a two-step reaction: glutamate is first activated by ATP to form Glu-AMP and then transferred to the acceptor end of tRNA(Glu). This Campylobacter jejuni subsp. doylei (strain ATCC BAA-1458 / RM4099 / 269.97) protein is Glutamate--tRNA ligase 2.